The primary structure comprises 321 residues: Methionyl-tRNA formyltransferase (321 aa).

Residue 111–114 (SLLP) participates in (6S)-5,6,7,8-tetrahydrofolate binding.

It belongs to the Fmt family.

The enzyme catalyses L-methionyl-tRNA(fMet) + (6R)-10-formyltetrahydrofolate = N-formyl-L-methionyl-tRNA(fMet) + (6S)-5,6,7,8-tetrahydrofolate + H(+). Its function is as follows. Attaches a formyl group to the free amino group of methionyl-tRNA(fMet). The formyl group appears to play a dual role in the initiator identity of N-formylmethionyl-tRNA by promoting its recognition by IF2 and preventing the misappropriation of this tRNA by the elongation apparatus. This chain is Methionyl-tRNA formyltransferase, found in Bifidobacterium animalis subsp. lactis (strain AD011).